A 155-amino-acid chain; its full sequence is Small ribosomal subunit protein uS9 (155 aa).

Belongs to the universal ribosomal protein uS9 family.

The polypeptide is Small ribosomal subunit protein uS9 (Sinorhizobium medicae (strain WSM419) (Ensifer medicae)).